The following is a 184-amino-acid chain: MSSPSKRREMDLMKLMMSDYKVDMINDGMHEFFVHFHGPKDSIYQGGVWKVRVELTEAYPYKSPSIGFTNKIYHPNVDEMSGSVCLDVINQTWSPMFDLVNIFEVFLPQLLLYPNPSDPLNGEAASLMMRDKNAYENKVKEYCERYAKPEDISPEEEEEESDEELSDAEGYDSGDEAIMGHADP.

The UBC core domain occupies Met1 to Lys148. Cys85 serves as the catalytic Glycyl thioester intermediate. A disordered region spans residues Tyr146 to Pro184. Positions Ile152–Asp175 are enriched in acidic residues.

It belongs to the ubiquitin-conjugating enzyme family.

It carries out the reaction S-ubiquitinyl-[E1 ubiquitin-activating enzyme]-L-cysteine + [E2 ubiquitin-conjugating enzyme]-L-cysteine = [E1 ubiquitin-activating enzyme]-L-cysteine + S-ubiquitinyl-[E2 ubiquitin-conjugating enzyme]-L-cysteine.. Its pathway is protein modification; protein ubiquitination. Functionally, catalyzes the covalent attachment of ubiquitin to other proteins. This Triticum aestivum (Wheat) protein is Ubiquitin-conjugating enzyme E2-23 kDa (UBC4).